Consider the following 408-residue polypeptide: LL-diaminopimelate aminotransferase (408 aa).

2 residues coordinate substrate: Tyr15 and Gly42. Residues Tyr72, 108–109, Tyr132, Asn186, Tyr217, and 245–247 contribute to the pyridoxal 5'-phosphate site; these read AK and SFS. Positions 109, 132, and 186 each coordinate substrate. Lys248 is modified (N6-(pyridoxal phosphate)lysine). Positions 256 and 291 each coordinate pyridoxal 5'-phosphate. Asn291 and Arg386 together coordinate substrate.

The protein belongs to the class-I pyridoxal-phosphate-dependent aminotransferase family. LL-diaminopimelate aminotransferase subfamily. In terms of assembly, homodimer. Requires pyridoxal 5'-phosphate as cofactor.

It catalyses the reaction (2S,6S)-2,6-diaminopimelate + 2-oxoglutarate = (S)-2,3,4,5-tetrahydrodipicolinate + L-glutamate + H2O + H(+). It participates in amino-acid biosynthesis; L-lysine biosynthesis via DAP pathway; LL-2,6-diaminopimelate from (S)-tetrahydrodipicolinate (aminotransferase route): step 1/1. Its function is as follows. Involved in the synthesis of meso-diaminopimelate (m-DAP or DL-DAP), required for both lysine and peptidoglycan biosynthesis. Catalyzes the direct conversion of tetrahydrodipicolinate to LL-diaminopimelate. The sequence is that of LL-diaminopimelate aminotransferase from Desulfotalea psychrophila (strain LSv54 / DSM 12343).